Consider the following 359-residue polypeptide: F-box protein At1g10895 (359 aa).

The F-box domain maps to 2–48 (TTMSDLDEIMVAEILCRTPMTCLKTVRSVCKKWNALSKKWFFFGKAK).

In Arabidopsis thaliana (Mouse-ear cress), this protein is F-box protein At1g10895.